The primary structure comprises 119 residues: Ribosome-binding factor A (119 aa).

The protein belongs to the RbfA family. In terms of assembly, monomer. Binds 30S ribosomal subunits, but not 50S ribosomal subunits or 70S ribosomes.

It localises to the cytoplasm. In terms of biological role, one of several proteins that assist in the late maturation steps of the functional core of the 30S ribosomal subunit. Associates with free 30S ribosomal subunits (but not with 30S subunits that are part of 70S ribosomes or polysomes). Required for efficient processing of 16S rRNA. May interact with the 5'-terminal helix region of 16S rRNA. This chain is Ribosome-binding factor A, found in Chlorobium limicola (strain DSM 245 / NBRC 103803 / 6330).